Reading from the N-terminus, the 152-residue chain is Large ribosomal subunit protein bL9 (152 aa).

This sequence belongs to the bacterial ribosomal protein bL9 family.

Binds to the 23S rRNA. The polypeptide is Large ribosomal subunit protein bL9 (Synechocystis sp. (strain ATCC 27184 / PCC 6803 / Kazusa)).